The following is a 256-amino-acid chain: Thiazole synthase (256 aa).

The active-site Schiff-base intermediate with DXP is the Lys96. Residues Gly157, 183-184, and 205-206 contribute to the 1-deoxy-D-xylulose 5-phosphate site; these read AG and NT.

Belongs to the ThiG family. Homotetramer. Forms heterodimers with either ThiH or ThiS.

The protein localises to the cytoplasm. It carries out the reaction [ThiS sulfur-carrier protein]-C-terminal-Gly-aminoethanethioate + 2-iminoacetate + 1-deoxy-D-xylulose 5-phosphate = [ThiS sulfur-carrier protein]-C-terminal Gly-Gly + 2-[(2R,5Z)-2-carboxy-4-methylthiazol-5(2H)-ylidene]ethyl phosphate + 2 H2O + H(+). It participates in cofactor biosynthesis; thiamine diphosphate biosynthesis. Catalyzes the rearrangement of 1-deoxy-D-xylulose 5-phosphate (DXP) to produce the thiazole phosphate moiety of thiamine. Sulfur is provided by the thiocarboxylate moiety of the carrier protein ThiS. In vitro, sulfur can be provided by H(2)S. The sequence is that of Thiazole synthase from Bacillus cereus (strain 03BB102).